The chain runs to 340 residues: Phosphate acyltransferase (340 aa).

The protein belongs to the PlsX family. As to quaternary structure, homodimer. Probably interacts with PlsY.

Its subcellular location is the cytoplasm. It catalyses the reaction a fatty acyl-[ACP] + phosphate = an acyl phosphate + holo-[ACP]. It participates in lipid metabolism; phospholipid metabolism. Its function is as follows. Catalyzes the reversible formation of acyl-phosphate (acyl-PO(4)) from acyl-[acyl-carrier-protein] (acyl-ACP). This enzyme utilizes acyl-ACP as fatty acyl donor, but not acyl-CoA. The polypeptide is Phosphate acyltransferase (Nitrosococcus oceani (strain ATCC 19707 / BCRC 17464 / JCM 30415 / NCIMB 11848 / C-107)).